The chain runs to 373 residues: tRNA/tmRNA (uracil-C(5))-methyltransferase (373 aa).

S-adenosyl-L-methionine is bound by residues Gln-190, Tyr-219, Asn-224, Glu-240, and Asp-300. Cys-325 (nucleophile) is an active-site residue. Glu-359 (proton acceptor) is an active-site residue.

The protein belongs to the class I-like SAM-binding methyltransferase superfamily. RNA M5U methyltransferase family. TrmA subfamily.

The enzyme catalyses uridine(54) in tRNA + S-adenosyl-L-methionine = 5-methyluridine(54) in tRNA + S-adenosyl-L-homocysteine + H(+). It catalyses the reaction uridine(341) in tmRNA + S-adenosyl-L-methionine = 5-methyluridine(341) in tmRNA + S-adenosyl-L-homocysteine + H(+). In terms of biological role, dual-specificity methyltransferase that catalyzes the formation of 5-methyluridine at position 54 (m5U54) in all tRNAs, and that of position 341 (m5U341) in tmRNA (transfer-mRNA). This chain is tRNA/tmRNA (uracil-C(5))-methyltransferase, found in Chromohalobacter salexigens (strain ATCC BAA-138 / DSM 3043 / CIP 106854 / NCIMB 13768 / 1H11).